Here is a 158-residue protein sequence, read N- to C-terminus: N-alpha-acetyltransferase RimI (158 aa).

Residues valine 8 to glycine 155 form the N-acetyltransferase domain.

It belongs to the acetyltransferase family. RimI subfamily. In terms of assembly, monomer. Interacts with TsaD. Interacts with GroS/GroES.

The enzyme catalyses N-terminal L-methionyl-L-alanyl-[protein] + acetyl-CoA = N-terminal N(alpha)-acetyl-L-methionyl-L-alanyl-[protein] + CoA + H(+). It catalyses the reaction N-terminal L-methionyl-L-seryl-[protein] + acetyl-CoA = N-terminal N(alpha)-acetyl-L-methionyl-L-seryl-[protein] + CoA + H(+). It carries out the reaction N-terminal L-methionyl-L-valyl-[protein] + acetyl-CoA = N-terminal N(alpha)-acetyl-L-methionyl-L-valyl-[protein] + CoA + H(+). The catalysed reaction is N-terminal L-methionyl-L-threonyl-[protein] + acetyl-CoA = N-terminal N(alpha)-acetyl-L-methionyl-L-threonyl-[protein] + CoA + H(+). The enzyme catalyses N-terminal L-methionyl-L-lysyl-[protein] + acetyl-CoA = N-terminal N(alpha)-acetyl-L-methionyl-L-lysyl-[protein] + CoA + H(+). It catalyses the reaction N-terminal L-methionyl-L-leucyl-[protein] + acetyl-CoA = N-terminal N(alpha)-acetyl-L-methionyl-L-leucyl-[protein] + CoA + H(+). It carries out the reaction N-terminal L-methionyl-L-phenylalanyl-[protein] + acetyl-CoA = N-terminal N(alpha)-acetyl-L-methionyl-L-phenylalanyl-[protein] + CoA + H(+). The catalysed reaction is N-terminal L-methionyl-L-tyrosyl-[protein] + acetyl-CoA = N-terminal N(alpha)-acetyl-L-methionyl-L-tyrosyl-[protein] + CoA + H(+). The enzyme catalyses N-terminal glycyl-[protein] + acetyl-CoA = N-terminal N(alpha)-acetylglycyl-[protein] + CoA + H(+). It catalyses the reaction N-terminal L-alanyl-[protein] + acetyl-CoA = N-terminal N(alpha)-acetyl-L-alanyl-[protein] + CoA + H(+). It carries out the reaction N-terminal L-seryl-[protein] + acetyl-CoA = N-terminal N(alpha)-acetyl-L-seryl-[protein] + CoA + H(+). The catalysed reaction is N-terminal L-valyl-[protein] + acetyl-CoA = N-terminal N(alpha)-acetyl-L-valyl-[protein] + CoA + H(+). The enzyme catalyses N-terminal L-cysteinyl-[protein] + acetyl-CoA = N-terminal N(alpha)-acetyl-L-cysteinyl-[protein] + CoA + H(+). It catalyses the reaction N-terminal L-threonyl-[protein] + acetyl-CoA = N-terminal N(alpha)-acetyl-L-threonyl-[protein] + CoA + H(+). Functionally, N-alpha-acetyltransferase that specifically mediates the acetylation of N-terminal residues. Able to mediate acetylation of a wide variety of N-terminal residues, with preference for hydrophobic N-termini. Acetylates GroS/GroES and GroEL1. Able to acetylate the ribosomal protein bS18, but it is unclear whether it acetylates its N-terminal alanine residue. In Mycobacterium tuberculosis (strain ATCC 25618 / H37Rv), this protein is N-alpha-acetyltransferase RimI.